The following is a 172-amino-acid chain: Pollen-specific protein-like At4g18596 (172 aa).

Positions 1-27 are cleaved as a signal peptide; sequence MASKAIFFFFVSAVCLSSLAGVAIADA. Intrachain disulfides connect Cys41-Cys112, Cys44-Cys157, and Cys65-Cys100. Asn70 is a glycosylation site (N-linked (GlcNAc...) asparagine).

This sequence belongs to the Ole e I family.

The protein localises to the secreted. The protein is Pollen-specific protein-like At4g18596 of Arabidopsis thaliana (Mouse-ear cress).